The sequence spans 1050 residues: DNA-directed RNA polymerase subunit beta (1050 aa).

Belongs to the RNA polymerase beta chain family. In plastids the minimal PEP RNA polymerase catalytic core is composed of four subunits: alpha, beta, beta', and beta''. When a (nuclear-encoded) sigma factor is associated with the core the holoenzyme is formed, which can initiate transcription (Potential).

It is found in the plastid. Its subcellular location is the apicoplast. The enzyme catalyses RNA(n) + a ribonucleoside 5'-triphosphate = RNA(n+1) + diphosphate. Its function is as follows. DNA-dependent RNA polymerase catalyzes the transcription of DNA into RNA using the four ribonucleoside triphosphates as substrates. In Neospora caninum (Coccidian parasite), this protein is DNA-directed RNA polymerase subunit beta (rpoB).